Reading from the N-terminus, the 574-residue chain is Pescadillo homolog (574 aa).

Residues 289–312 (PSEPNDDTEVDEFPADPENAGLEE) are disordered. Residues 292–303 (PNDDTEVDEFPA) show a composition bias toward acidic residues. Positions 323 to 416 (KHKSLFVGLK…LLLPVEDYFP (94 aa)) constitute a BRCT domain. Residues 452–486 (LGLDEEDDDDDDDDEEEDDDDDEEEEDKKLRQLEN) are disordered. Residues 453–477 (GLDEEDDDDDDDDEEEDDDDDEEEE) show a composition bias toward acidic residues.

Belongs to the pescadillo family. In terms of assembly, component of the PeBoW complex, composed of bop1, pes1 and wdr12. The complex is held together by bop1, which interacts with pes1 via its N-terminal domain and with wdr12 via a high-affinity interaction between the seven-bladed beta-propeller domains of the 2 proteins. The PeBoW complex associates with the 66S pre-ribosome.

The protein localises to the nucleus. The protein resides in the nucleolus. It is found in the nucleoplasm. In terms of biological role, component of the PeBoW complex, which is required for maturation of 28S and 5.8S ribosomal RNAs and formation of the 60S ribosome. Required for neural crest migration and eye development. In Xenopus laevis (African clawed frog), this protein is Pescadillo homolog (pes1).